Reading from the N-terminus, the 284-residue chain is Bifunctional protein FolD (284 aa).

Residues 166–168 and isoleucine 232 contribute to the NADP(+) site; that span reads GAS.

Belongs to the tetrahydrofolate dehydrogenase/cyclohydrolase family. As to quaternary structure, homodimer.

It catalyses the reaction (6R)-5,10-methylene-5,6,7,8-tetrahydrofolate + NADP(+) = (6R)-5,10-methenyltetrahydrofolate + NADPH. It carries out the reaction (6R)-5,10-methenyltetrahydrofolate + H2O = (6R)-10-formyltetrahydrofolate + H(+). Its pathway is one-carbon metabolism; tetrahydrofolate interconversion. Functionally, catalyzes the oxidation of 5,10-methylenetetrahydrofolate to 5,10-methenyltetrahydrofolate and then the hydrolysis of 5,10-methenyltetrahydrofolate to 10-formyltetrahydrofolate. This Shewanella baltica (strain OS223) protein is Bifunctional protein FolD.